A 437-amino-acid polypeptide reads, in one-letter code: Serine hydroxymethyltransferase (437 aa).

(6S)-5,6,7,8-tetrahydrofolate contacts are provided by residues Leu-130 and 134–136; that span reads GHL. Lys-239 carries the post-translational modification N6-(pyridoxal phosphate)lysine.

It belongs to the SHMT family. Homodimer. It depends on pyridoxal 5'-phosphate as a cofactor.

The protein resides in the cytoplasm. It carries out the reaction (6R)-5,10-methylene-5,6,7,8-tetrahydrofolate + glycine + H2O = (6S)-5,6,7,8-tetrahydrofolate + L-serine. The protein operates within one-carbon metabolism; tetrahydrofolate interconversion. It functions in the pathway amino-acid biosynthesis; glycine biosynthesis; glycine from L-serine: step 1/1. Its function is as follows. Catalyzes the reversible interconversion of serine and glycine with tetrahydrofolate (THF) serving as the one-carbon carrier. This reaction serves as the major source of one-carbon groups required for the biosynthesis of purines, thymidylate, methionine, and other important biomolecules. Also exhibits THF-independent aldolase activity toward beta-hydroxyamino acids, producing glycine and aldehydes, via a retro-aldol mechanism. In Bartonella tribocorum (strain CIP 105476 / IBS 506), this protein is Serine hydroxymethyltransferase.